Consider the following 657-residue polypeptide: MEPTASQGIQYLRGGVEWILKLLNLHILNVKHENKPLLFRLIDLKVYIPSSVSTVRWSSGASSYVILGEYRKMRSAVALLFLLVAYCGGVVHAGEIVAELYHTNVTVKWHTDYERQLVDFSIWFGASTPDVLFLGFSDFGDTNNSDVLMYYNSKKEIKDAYTNRDFKITSDLQQDFQLLRKRKDHIVVRRKLTTCDSRDYAFLPGTTQFYIAASWGSTNLVDIRDKRWVVDKKFGKVIEGPTDQPNIEEEPAALEKDVKVVIVNSNSPDPIPNVETTYKCIIRKMPFDTVNNMYHVVRMEPYVTPGNEHLVHHMEIFMCRDEVEEWSGSCNDPKKPPKSKSCSHVIAAWAMGEGPIHYPKEAGLPIGGKGKNAYVMVEIHYNNPELHKGVIDSSGFQFFVTGQLRKYDAGIMELGLIYSDANSVPPNQKAWAMNGYCPSQCTKNLPEEGINIFASQLHAHLTGRKLFTSQYRSGVRIGDVNRDEHYSPHWQHLQQLRPVVKVMPGDTLVTTCVYDTRKRSKVTFGGYRIVDEMCVNYIYYYPASDVEVCKSAISNSTLRAYFSERHGMDGKRMQISDMYSNVKDWGNGVDEEFYNVLNVGNMNMNCLKSNGEPFEFESKDSRQSWENMARPTFVSGSFITTRDRFQCPAINDMINFE.

A helical transmembrane segment spans residues 77-97 (VALLFLLVAYCGGVVHAGEIV). The DOMON domain maps to 103-214 (TNVTVKWHTD…GTTQFYIAAS (112 aa)). Residues asparagine 104 and asparagine 143 are each glycosylated (N-linked (GlcNAc...) asparagine). Residue tyrosine 278 is part of the active site. Disulfide bonds link cysteine 280/cysteine 330 and cysteine 319/cysteine 342. Positions 312 and 313 each coordinate Cu(2+). Cu(2+) is bound by residues histidine 380, histidine 458, histidine 460, and methionine 533. Intrachain disulfides connect cysteine 437–cysteine 549, cysteine 441–cysteine 606, and cysteine 512–cysteine 534. Histidine 458 is a catalytic residue. Asparagine 555 carries N-linked (GlcNAc...) asparagine glycosylation.

The protein belongs to the copper type II ascorbate-dependent monooxygenase family. It depends on Cu(2+) as a cofactor. In terms of tissue distribution, present in synaptic regions of RIC interneurons. Present in gonadal sheath cells of hermaphrodites (at protein level).

It localises to the membrane. The enzyme catalyses tyramine + L-ascorbate + O2 = (R)-octopamine + L-dehydroascorbate + H2O. Required for the conversion of tyramine to octopamine, a precursor of octapamine but probably itself a neurotransmitter. Involved in the regulation of egg laying, which is inhibited by tyramine. Due to its involvement in octopamine biosynthesis, also required for crtc-1-dependent regulation of AMPK-mediated longevity. This chain is Tyramine beta-hydroxylase, found in Caenorhabditis elegans.